The sequence spans 656 residues: DNA ligase (656 aa).

NAD(+) is bound by residues 32-36 (DEEYD), 81-82 (SM), and glutamate 112. The active-site N6-AMP-lysine intermediate is the lysine 114. Positions 135, 169, 284, and 308 each coordinate NAD(+). Cysteine 402, cysteine 405, cysteine 418, and cysteine 423 together coordinate Zn(2+). One can recognise a BRCT domain in the interval 577-656 (VQKTPFTGKT…DMWKMLKEGK (80 aa)).

It belongs to the NAD-dependent DNA ligase family. LigA subfamily. Requires Mg(2+) as cofactor. Mn(2+) serves as cofactor.

It catalyses the reaction NAD(+) + (deoxyribonucleotide)n-3'-hydroxyl + 5'-phospho-(deoxyribonucleotide)m = (deoxyribonucleotide)n+m + AMP + beta-nicotinamide D-nucleotide.. In terms of biological role, DNA ligase that catalyzes the formation of phosphodiester linkages between 5'-phosphoryl and 3'-hydroxyl groups in double-stranded DNA using NAD as a coenzyme and as the energy source for the reaction. It is essential for DNA replication and repair of damaged DNA. This Nautilia profundicola (strain ATCC BAA-1463 / DSM 18972 / AmH) protein is DNA ligase.